The following is a 185-amino-acid chain: MIEIRFHGRGGQGAVTAANILAEAAFIEGKYVQAFPFFGVERRGAPVTAFTRIDEKPIRIKTQIYEPDVVVVLDPSLLETVDVTAGLKEDGIVIVNTEKSKEEVLEKLKRKPKKLALVDATTIALETLGLPITNTAILGAVAKATGLVKIESVETAIKDTFSGELGEKNAKAAREAFEKTQIFEV.

Heterotetramer of one alpha, one beta, one delta and one gamma chain.

The catalysed reaction is 2 oxidized [2Fe-2S]-[ferredoxin] + pyruvate + CoA = 2 reduced [2Fe-2S]-[ferredoxin] + acetyl-CoA + CO2 + H(+). It catalyses the reaction 3-methyl-2-oxobutanoate + 2 oxidized [2Fe-2S]-[ferredoxin] + CoA = 2-methylpropanoyl-CoA + 2 reduced [2Fe-2S]-[ferredoxin] + CO2 + H(+). The polypeptide is Pyruvate/ketoisovalerate oxidoreductases common subunit gamma (porG) (Pyrococcus abyssi (strain GE5 / Orsay)).